Here is a 329-residue protein sequence, read N- to C-terminus: Short-chain dehydrogenase/reductase tropG (329 aa).

5 residues coordinate NADP(+): Lys57, Asp86, Asn113, Tyr203, and Lys207. The active-site Proton acceptor is the Tyr203. The Lowers pKa of active site Tyr role is filled by Lys207.

It belongs to the short-chain dehydrogenases/reductases (SDR) family.

It participates in secondary metabolite biosynthesis. Its function is as follows. Short-chain dehydrogenase/reductase; part of the gene cluster that mediates the biosynthesis of the tropolone class of fungal maleic anhydrides. The pathway begins with the synthesis of 3-methylorcinaldehyde by the non-reducing polyketide synthase (PKS) tropA. 3-methylorcinaldehyde is the substrate for the FAD-dependent monooxygenase tropB to yield a dearomatized hydroxycyclohexadione. The 2-oxoglutarate-dependent dioxygenase tropC then performs the oxidative ring expansion to provide the first tropolone metabolite stipitaldehyde. Trop D converts stipitaldehyde into stipitacetal which is in turn converted to stipitalide by the short-chain dehydrogenase/reductase tropE. The next steps involve tropF, tropG, tropH, tropI and tropJ to form successive tropolone maleic anhydrides including stipitaldehydic, stipitatonic and stipitatic acids. The chain is Short-chain dehydrogenase/reductase tropG from Talaromyces stipitatus (strain ATCC 10500 / CBS 375.48 / QM 6759 / NRRL 1006) (Penicillium stipitatum).